Here is a 206-residue protein sequence, read N- to C-terminus: UPF0328 protein ECU01_0050/ECU01_1560 (206 aa).

2 disordered regions span residues 1 to 153 (MPRP…HSHT) and 179 to 206 (GRLHGSPTKGAQTAQQAQPHPPKQLATL). Positions 74–96 (HTEGCHTHEANPEPNTKHTETES) are enriched in basic and acidic residues. 2 stretches are compositionally biased toward polar residues: residues 97-120 (PKPQTSTQHHTPITIPSSLLSQNT) and 132-148 (SRPSTIPANTYQPQSPH).

This sequence belongs to the UPF0328 family.

In Encephalitozoon cuniculi (strain GB-M1) (Microsporidian parasite), this protein is UPF0328 protein ECU01_0050/ECU01_1560.